An 88-amino-acid chain; its full sequence is Large ribosomal subunit protein bL31B (88 aa).

Belongs to the bacterial ribosomal protein bL31 family. Type B subfamily. As to quaternary structure, part of the 50S ribosomal subunit.

This is Large ribosomal subunit protein bL31B from Paraburkholderia xenovorans (strain LB400).